We begin with the raw amino-acid sequence, 284 residues long: Tryptophan 2,3-dioxygenase (284 aa).

Substrate-binding positions include 51-55 (FIIQH), Y113, and R117. Residue H240 participates in heme binding. Substrate is bound at residue T254.

It belongs to the tryptophan 2,3-dioxygenase family. Homotetramer. Requires heme as cofactor.

The enzyme catalyses L-tryptophan + O2 = N-formyl-L-kynurenine. The protein operates within amino-acid degradation; L-tryptophan degradation via kynurenine pathway; L-kynurenine from L-tryptophan: step 1/2. In terms of biological role, heme-dependent dioxygenase that catalyzes the oxidative cleavage of the L-tryptophan (L-Trp) pyrrole ring and converts L-tryptophan to N-formyl-L-kynurenine. Catalyzes the oxidative cleavage of the indole moiety. The protein is Tryptophan 2,3-dioxygenase of Rhodococcus jostii (strain RHA1).